The sequence spans 245 residues: Lytic switch protein BZLF1 (245 aa).

The transactivation stretch occupies residues 1–167 (MMDPNSTSED…RTRKPQQPES (167 aa)). A phosphothreonine; by host mark is found at Thr14 and Thr159. A Bipartite nuclear localization signal motif is present at residues 157-194 (RRTRKPQQPESLEECDSELEIKRYKNRVASRKCRAKFK). Residues Ser167, Ser173, and Ser186 each carry the phosphoserine; by host modification. Positions 170–228 (ECDSELEIKRYKNRVASRKCRAKFKQLLQHYREVAAAKSSENDRLRLLLKQMCPSLDVD) constitute a bZIP domain. The segment at 178–195 (KRYKNRVASRKCRAKFKQ) is basic motif. The interval 196 to 228 (LLQHYREVAAAKSSENDRLRLLLKQMCPSLDVD) is leucine-zipper. Positions 229–245 (SIIPRTPDVLHEDLLNF) are accessory activation domain.

This sequence belongs to the bZIP family. In terms of assembly, homodimer. Interacts (via b-ZIP domain) with the DNA polymerase processivity factor BMRF1 (via N-terminus); this interaction may inhibit BZLF1-induced transcription of the BMRF1 promoter. Interacts with human UBN1, CRTC2 and RACK1. Interacts (via N-terminus) with human PAX5 (via N-terminus); this interaction inhibits BZLF1-mediated lytic viral reactivation. Interacts (via leucine-zipper domain) with host CEBPA; this interaction induces G1 host cell cycle arrest. Interacts (via C-terminus) with host TP53BP1 (via C-terminus); this interaction is involved in the activation of the viral lytic cycle. Interacts with host chromatin-remodeling ATPase INO80; this interaction participates to the activation of early lytic viral genes by BZLF1. Interacts with host regulator of chromatin SMARCA5/hSNF2H; this interaction participates to the activation of early lytic viral genes by BZLF1. Interacts with host PLSCR1/Phospholipid scramblase 1; this interaction negatively regulates the transcriptional regulatory activity of BZLF1 by preventing the formation of the BZLF1-CBP complex.

The protein localises to the host nucleus. In terms of biological role, transcription factor that acts as a molecular switch to induce the transition from the latent to the lytic or productive phase of the virus cycle. Mediates the switch from the latent to the lytic cycle of infection in cells containing a highly methylated viral genome. Probably binds to silenced chromatin and recruits host chromatin-remodeling enzymes. Regulates this switch by binding to 2 types of ZEBRA response elements (ZREs): the CpG-free AP-1 like elements (latency) and the methylated CpG-containing elements (lytic replication). Activates preferentially the methylated forms of the viral lytic R (BRLF1) and Na (BRRF1) gene promoters, the latters being the first genes activated during Z-mediated reactivation in latently infected cells. BZLF1 and BRLF1 act together to trigger lytic replication. Also binds the lytic origin of replication, oriLyt. Induces G1 cell cycle arrest by stabilizing the host CCAAT/enhancer binding protein CEBPA. This function is important because the lytic cycle preferentially takes place in host cells arrested in G1. This is Lytic switch protein BZLF1 from Epstein-Barr virus (strain B95-8) (HHV-4).